A 247-amino-acid polypeptide reads, in one-letter code: MSIPLLEYKPSSQNQRVPGYEVPNEDTPRIYRIEDAAYDSELKELIWATYRQVFSEHVILKFFRQGNLESQLKNRAISVRDFVRGLAKSEAFKTLVIKSNSNYRLVELALKRLLGRAPYNKDEEIAWSIKIATNGWDGFVDALLDSEEYQSNFGENIVPYQRRRYKDRPFNLVTPRYGNYWRDKLESERYIEGDIKNFLELAKSIEIKTVTFTPVSTANIKIPDTTRNTTPTGIPISVNPSANFPVR.

A PBS-linker domain is found at 11-189; the sequence is SSQNQRVPGY…YWRDKLESER (179 aa). A disordered region spans residues 223–247; it reads PDTTRNTTPTGIPISVNPSANFPVR.

Belongs to the phycobilisome linker protein family. In terms of assembly, part of the phycobilisome, a hemidiscoidal structure that is composed of two distinct substructures: a core complex and a number of rods radiating from the core.

The protein resides in the cellular thylakoid membrane. In terms of biological role, rod-core linker protein required for attachment of phycocyanin to allophycocyanin in cores of phycobilisomes. Functionally, linker polypeptides determine the state of aggregation and the location of the disk-shaped phycobiliprotein units within the phycobilisome and modulate their spectroscopic properties in order to mediate a directed and optimal energy transfer. The sequence is that of Phycobilisome rod-core linker polypeptide CpcG2 from Nostoc sp. (strain PCC 7120 / SAG 25.82 / UTEX 2576).